The following is a 445-amino-acid chain: Transmembrane protein 184C (445 aa).

Helical transmembrane passes span 15–35 (LVVL…VWEL), 46–66 (AWFI…WGIL), 84–104 (ILWM…YPNI), 177–197 (YTVV…VGVY), 210–230 (YLVI…VLFY), 252–272 (VVFV…VGVI), and 285–305 (AVAT…AAIA). Disordered stretches follow at residues 369 to 393 (EHTS…SSPM) and 421 to 445 (TSAT…LDRS). Residues 370-390 (HTSLLSSSTQDPISDASSMPS) show a composition bias toward polar residues.

Belongs to the TMEM184 family.

It localises to the membrane. Its function is as follows. May play a role in cell growth. The protein is Transmembrane protein 184C (TMEM184C) of Gallus gallus (Chicken).